The following is a 573-amino-acid chain: Urease subunit alpha 2 (573 aa).

Positions 136–573 constitute a Urease domain; sequence GAIDAHVHLI…LPMAQRYFLF (438 aa). Residues His141, His143, and Lys224 each contribute to the Ni(2+) site. Position 224 is an N6-carboxylysine (Lys224). Residue His226 participates in substrate binding. Ni(2+) contacts are provided by His253 and His279. His327 serves as the catalytic Proton donor. Asp367 is a Ni(2+) binding site.

It belongs to the metallo-dependent hydrolases superfamily. Urease alpha subunit family. May form a heterohexamer of 3 UreC (alpha) and 3 UreAB (gamma/beta) subunits. May also form a heterotrimer of UreA (gamma), UreB (beta) and UreC (alpha) subunits. Three heterotrimers associate to form the active enzyme. Ni cation is required as a cofactor. Post-translationally, carboxylation allows a single lysine to coordinate two nickel ions.

Its subcellular location is the cytoplasm. It catalyses the reaction urea + 2 H2O + H(+) = hydrogencarbonate + 2 NH4(+). Its pathway is nitrogen metabolism; urea degradation; CO(2) and NH(3) from urea (urease route): step 1/1. The polypeptide is Urease subunit alpha 2 (Streptomyces avermitilis (strain ATCC 31267 / DSM 46492 / JCM 5070 / NBRC 14893 / NCIMB 12804 / NRRL 8165 / MA-4680)).